The following is a 126-amino-acid chain: Glycine cleavage system H protein (126 aa).

In terms of domain architecture, Lipoyl-binding spans Thr24–Lys105. At Lys65 the chain carries N6-lipoyllysine.

It belongs to the GcvH family. In terms of assembly, the glycine cleavage system is composed of four proteins: P, T, L and H. The cofactor is (R)-lipoate.

Its function is as follows. The glycine cleavage system catalyzes the degradation of glycine. The H protein shuttles the methylamine group of glycine from the P protein to the T protein. The polypeptide is Glycine cleavage system H protein (Burkholderia vietnamiensis (strain G4 / LMG 22486) (Burkholderia cepacia (strain R1808))).